The following is a 151-amino-acid chain: Large ribosomal subunit protein uL13 (151 aa).

The tract at residues 129 to 151 (PTHPHDAQKPKELNINTIPGAES) is disordered. Basic and acidic residues predominate over residues 131–140 (HPHDAQKPKE).

This sequence belongs to the universal ribosomal protein uL13 family. As to quaternary structure, part of the 50S ribosomal subunit.

In terms of biological role, this protein is one of the early assembly proteins of the 50S ribosomal subunit, although it is not seen to bind rRNA by itself. It is important during the early stages of 50S assembly. In Trichormus variabilis (strain ATCC 29413 / PCC 7937) (Anabaena variabilis), this protein is Large ribosomal subunit protein uL13.